A 248-amino-acid chain; its full sequence is tRNA (guanine-N(1)-)-methyltransferase (248 aa).

Residues Gly-113 and 133–138 contribute to the S-adenosyl-L-methionine site; that span reads IGDYVL.

The protein belongs to the RNA methyltransferase TrmD family. In terms of assembly, homodimer.

It is found in the cytoplasm. The enzyme catalyses guanosine(37) in tRNA + S-adenosyl-L-methionine = N(1)-methylguanosine(37) in tRNA + S-adenosyl-L-homocysteine + H(+). Its function is as follows. Specifically methylates guanosine-37 in various tRNAs. The protein is tRNA (guanine-N(1)-)-methyltransferase of Shewanella loihica (strain ATCC BAA-1088 / PV-4).